Consider the following 288-residue polypeptide: Serine/threonine-protein acetyltransferase YopJ (288 aa).

Catalysis depends on residues H109 and E128. H109 contributes to the CoA binding site. 167–168 (RS) contributes to the CoA binding site. C172 is a catalytic residue. Residues 182–185 (KLYI) and 224–225 (KH) contribute to the 1D-myo-inositol hexakisphosphate site. Residue 227-230 (QGKK) participates in CoA binding. R257 serves as a coordination point for 1D-myo-inositol hexakisphosphate. 266–270 (DGKEL) provides a ligand contact to CoA.

The protein belongs to the acetyltransferase YopJ family. It depends on 1D-myo-inositol hexakisphosphate as a cofactor.

It is found in the secreted. The catalysed reaction is L-threonyl-[protein] + acetyl-CoA = O-acetyl-L-threonyl-[protein] + CoA. The enzyme catalyses L-seryl-[protein] + acetyl-CoA = O-acetyl-L-seryl-[protein] + CoA. With respect to regulation, 1D-myo-inositol hexakisphosphate activates protein-acetyltransferase activity via an allosteric mechanism: 1D-myo-inositol hexakisphosphate-binding induces a conformational rearrangement that stimulates the interaction with acetyl-CoA. Serine/threonine-protein acetyltransferase translocated into infected cells, which inhibits the host immune response and induces cell death by mediating acetylation of target proteins. Inhibits the MAPK and NF-kappa-B signaling pathways by acetylating protein-kinases such as MAP2K1, MAP2K6, MAP3K7/TAK1 and I-kappa-B kinase (CHUK/IKKA and IKBKB) on serine and threonine residues critical for their activation by phosphorylation, thereby preventing protein-kinase activation. Promotes pyroptosis, a programmed cell death, in host cells by mediating acetylation of MAP3K7/TAK1: MAP3K7/TAK1 inactivation triggers activation of caspase-8 (CASP8), followed by CASP8-dependent cleavage of gasdermin-D (GSDMD) and induction of pyroptosis. Also able to induce intestinal barrier dysfunction by acetylating and inhibiting host protein-kinases RIPK2/RICK and MAP3K7/TAK1, thereby promoting cell death. In Yersinia pseudotuberculosis serotype I (strain IP32953), this protein is Serine/threonine-protein acetyltransferase YopJ.